The following is a 374-amino-acid chain: Aminodeoxychorismate lyase (374 aa).

The protein belongs to the class-IV pyridoxal-phosphate-dependent aminotransferase family. Homodimer. It depends on pyridoxal 5'-phosphate as a cofactor.

The protein localises to the cytoplasm. The catalysed reaction is 4-amino-4-deoxychorismate = 4-aminobenzoate + pyruvate + H(+). It functions in the pathway cofactor biosynthesis; tetrahydrofolate biosynthesis; 4-aminobenzoate from chorismate: step 2/2. In terms of biological role, converts 4-amino-4-deoxychorismate into 4-aminobenzoate (PABA) and pyruvate. In Saccharomyces cerevisiae (strain ATCC 204508 / S288c) (Baker's yeast), this protein is Aminodeoxychorismate lyase (ABZ2).